A 255-amino-acid polypeptide reads, in one-letter code: 5-oxoprolinase subunit A 2 (255 aa).

The protein belongs to the LamB/PxpA family. In terms of assembly, forms a complex composed of PxpA, PxpB and PxpC.

The catalysed reaction is 5-oxo-L-proline + ATP + 2 H2O = L-glutamate + ADP + phosphate + H(+). In terms of biological role, catalyzes the cleavage of 5-oxoproline to form L-glutamate coupled to the hydrolysis of ATP to ADP and inorganic phosphate. In Agrobacterium fabrum (strain C58 / ATCC 33970) (Agrobacterium tumefaciens (strain C58)), this protein is 5-oxoprolinase subunit A 2.